The sequence spans 551 residues: Peptidyl-prolyl cis-trans isomerase-like 4 (551 aa).

In terms of domain architecture, PPIase cyclophilin-type spans 1–185 (MSVLLETSLG…RDIRIRHVVV (185 aa)). Positions 54–88 (GDPSNTGKGGASIWSQLPSTSQDSSTSTYFTPESS) are disordered. Polar residues predominate over residues 66–88 (IWSQLPSTSQDSSTSTYFTPESS). The RRM domain occupies 262-340 (NILFVCKLNP…RRIWVDFSQS (79 aa)). The segment at 352 to 551 (RNAGSDAPRA…RQRSRDGSRR (200 aa)) is disordered. 2 stretches are compositionally biased toward basic and acidic residues: residues 384–397 (KRGD…RDQP) and 408–454 (SRQD…SHRD). A compositionally biased stretch (basic residues) spans 455 to 464 (HERHHLSRHV). Residues 465 to 551 (RPSDEGESKC…RQRSRDGSRR (87 aa)) are compositionally biased toward basic and acidic residues.

This sequence belongs to the cyclophilin-type PPIase family. PPIL4 subfamily.

The protein resides in the nucleus. It catalyses the reaction [protein]-peptidylproline (omega=180) = [protein]-peptidylproline (omega=0). PPIases accelerate the folding of proteins. It catalyzes the cis-trans isomerization of proline imidic peptide bonds in oligopeptides. This Mycosarcoma maydis (Corn smut fungus) protein is Peptidyl-prolyl cis-trans isomerase-like 4 (CYP6).